The sequence spans 117 residues: Big defensin (117 aa).

Residues 1–23 (MKGNIGIAVFYMLLLLLPTDSIG) form the signal peptide. A propeptide spanning residues 26–36 (MEEEQEKLFRQ) is cleaved from the precursor. 3 disulfides stabilise this stretch: Cys-83-Cys-113, Cys-90-Cys-108, and Cys-94-Cys-114.

Belongs to the big defensin family. Interacts with intracellular coagulation inhibitor 1/LICI-1. In terms of tissue distribution, expressed in all tissues examined, including hemocytes, heart, hepatopancreas, stomach, intestine and skeletal muscle.

The protein localises to the secreted. Its function is as follows. Significantly inhibits the growth of Gram-negative and Gram-positive bacteria and fungi in vitro. In Tachypleus tridentatus (Japanese horseshoe crab), this protein is Big defensin.